Reading from the N-terminus, the 677-residue chain is Envelope glycoprotein (677 aa).

Positions 1 to 33 are cleaved as a signal peptide; sequence MGSGYQLLQLPRERFRKTSFLVWVIILFQRAIS. At 34 to 651 the chain is on the extracellular side; sequence MPLGIVTNST…DLNLWTGWRQ (618 aa). An N-linked (GlcNAc...) asparagine; by host glycan is attached at Asn41. 5 disulfides stabilise this stretch: Cys54/Cys610, Cys109/Cys136, Cys122/Cys148, Cys512/Cys557, and Cys602/Cys609. Positions 55-202 are receptor-binding; the sequence is RDKLSSTSQL…HFWKATPAHE (148 aa). N-linked (GlcNAc...) asparagine; by host glycosylation is found at Asn205, Asn239, Asn258, Asn269, Asn297, Asn317, Asn318, Asn339, Asn406, Asn420, Asn435, and Asn463. The mucin-like region stretch occupies residues 306 to 486; that stretch reads NLHFQILSTH…PSQPGFTINT (181 aa). Residues 315 to 326 are compositionally biased toward polar residues; sequence HTNNSSDQSPAG. 3 disordered regions span residues 315–349, 370–482, and 489–508; these read HTNN…TDSP, NGET…QPGF, and KVAD…RQNT. Composition is skewed to polar residues over residues 370–421 and 429–472; these read NGET…ASNE and NPIQ…TSPG. The tract at residues 525–540 is fusion peptide; sequence GAAVGLAWIPYFGPAA. The stretch at 555-596 forms a coiled coil; it reads LICGLRQLANETTQALQLFLRATTELRTYSLLNRKAIDFLLQ. Residue Asn564 is glycosylated (N-linked (GlcNAc...) asparagine; by host). Residues 616-635 are a coiled coil; it reads WTKNITDEINQIKHDFIDNP. Asn619 is a glycosylation site (N-linked (GlcNAc...) asparagine; by host). The helical transmembrane segment at 652 to 672 threads the bilayer; it reads WIPAGIGIIGVIIAIIALLCI. S-palmitoyl cysteine; by host attachment occurs at residues Cys671 and Cys673. Over 673–677 the chain is Cytoplasmic; it reads CKILC.

The protein belongs to the filoviruses glycoprotein family. As to quaternary structure, homotrimer; each monomer consists of a GP1 and a GP2 subunit linked by disulfide bonds. The resulting peplomers (GP1,2) protrude from the virus surface as spikes. Interacts with host integrin alpha-V/ITGAV. Interacts with host CLEC10A. Binds also to host CD209 and CLEC4M/DC-SIGN(R). Interacts with host FOLR1. Interacts with BST2; this interaction inhibits the antiviral effect of BST2 and this allows viral release from infected cells. Interacts with host FCN1; this interaction enhances viral entry. Interacts with host TLR4; this interaction induces cell death in T-lymphocytes or proinflammatory cytokines and SOCS1 production in monocytes. In terms of assembly, interacts with host entry receptor NPC1. GP1 and GP2delta are part of GP1,2delta soluble complexes released by ectodomain shedding. Post-translationally, the signal peptide region modulates GP's high mannose glycosylation, thereby determining the efficiency of the interactions with DC-SIGN(R). In terms of processing, N-glycosylated. O-glycosylated in the mucin-like region. Post-translationally, palmitoylation of GP2 is not required for its function. In terms of processing, specific enzymatic cleavages in vivo yield mature proteins. The precursor is processed into GP1 and GP2 by host cell furin in the trans Golgi, and maybe by other host proteases, to yield the mature GP1 and GP2 proteins. The cleavage site corresponds to the furin optimal cleavage sequence [KR]-X-[KR]-R. This cleavage does not seem to be required for function. After the internalization of the virus into cell endosomes, GP1 C-terminus is removed by the endosomal proteases cathepsin B, cathepsin L, or both, leaving a 19-kDa N-terminal fragment which is further digested by cathepsin B. Proteolytic processing of GP1,2 by host ADAM17 can remove the transmembrane anchor of GP2 and leads to shedding of complexes consisting in GP1 and truncated GP2 (GP1,2delta).

Its subcellular location is the virion membrane. It localises to the host cell membrane. The protein resides in the secreted. In terms of biological role, trimeric GP1,2 complexes form the virion surface spikes and mediate the viral entry processes, with GP1 acting as the receptor-binding subunit and GP2 as the membrane fusion subunit. At later times of infection, down-regulates the expression of various host cell surface molecules that are essential for immune surveillance and cell adhesion. Down-modulates several integrins including ITGA1, ITGA2, ITGA3, ITGA4, ITGA5, ITGA6, ITGAV and ITGB1. This decrease in cell adhesion molecules may lead to cell detachment, contributing to the disruption of blood vessel integrity and hemorrhages developed during infection (cytotoxicity). Interacts with host TLR4 and thereby stimulates the differentiation and activation of monocytes leading to bystander death of T-lymphocytes. Down-regulates as well the function of host natural killer cells. Counteracts the antiviral effect of host BST2/tetherin that restricts release of progeny virions from infected cells. However, cooperates with VP40 and host BST2 to activate canonical NF-kappa-B pathway in a manner dependent on neddylation. Functionally, functions as a decoy for anti-GP1,2 antibodies thereby contributing to viral immune evasion. Interacts and activates host macrophages and dendritic cells inducing up-regulation of cytokine transcription. This effect is mediated throught activation of host TLR4. Its function is as follows. Responsible for binding to the receptor(s) on target cells. Interacts with CD209/DC-SIGN and CLEC4M/DC-SIGNR which act as cofactors for virus entry into dendritic cells (DCs) and endothelial cells. Binding to the macrophage specific lectin CLEC10A also seems to enhance virus infectivity. Interaction with FOLR1/folate receptor alpha may be a cofactor for virus entry in some cell types, although results are contradictory. Members of the Tyro3 receptor tyrosine kinase family also seem to be cell entry factors in filovirus infection. Once attached, the virions are internalized through clathrin-dependent endocytosis and/or macropinocytosis. After internalization of the virus into the endosomes of the host cell, proteolysis of GP1 by two cysteine proteases, CTSB/cathepsin B and CTSL/cathepsin L removes the glycan cap and allows GP1 binding to the host entry receptor NPC1. NPC1-binding, Ca(2+) and acidic pH induce a conformational change of GP2, which unmasks its fusion peptide and permit membranes fusion. Acts as a class I viral fusion protein. Under the current model, the protein has at least 3 conformational states: pre-fusion native state, pre-hairpin intermediate state, and post-fusion hairpin state. During viral and target cell membrane fusion, the coiled coil regions (heptad repeats) assume a trimer-of-hairpins structure, positioning the fusion peptide in close proximity to the C-terminal region of the ectodomain. The formation of this structure appears to drive apposition and subsequent fusion of viral and target cell membranes. Responsible for penetration of the virus into the cell cytoplasm by mediating the fusion of the membrane of the endocytosed virus particle with the endosomal membrane. Low pH in endosomes induces an irreversible conformational change in GP2, releasing the fusion hydrophobic peptide. This Homo sapiens (Human) protein is Envelope glycoprotein (GP).